We begin with the raw amino-acid sequence, 146 residues long: Envelope protein OPG155 (146 aa).

The helical; Signal-anchor for type III membrane protein transmembrane segment at 1–21 (MNSLSIFFIVVATAAVCLLFI) threads the bilayer. The Intravirion portion of the chain corresponds to 22 to 146 (QGYSIYENYG…VECQFLKSVL (125 aa)).

Belongs to the orthopoxvirus OPG155 protein family. In terms of assembly, part of a stable entry-fusion complex (EFC) which is at least composed of proteins OPG143, OPG147, OPG155, OPG086, OPG094, OPG107, OPG104, and OPG099. Formation of the viral membrane is necessary for the assembly of the complex. Interacts directly with protein OPG107. Post-translationally, contains two intramolecular disulfide bonds. They are created by the viral disulfide bond formation pathway, a poxvirus-specific pathway that operates on the cytoplasmic side of the MV membranes.

It is found in the virion membrane. Functionally, envelope protein required for virus entry into host cell and for cell-cell fusion (syncytium formation). In Variola virus (isolate Human/India/Ind3/1967) (VARV), this protein is Envelope protein OPG155 (OPG155).